Reading from the N-terminus, the 444-residue chain is tRNA-2-methylthio-N(6)-dimethylallyladenosine synthase (444 aa).

The 117-residue stretch at 4–120 folds into the MTTase N-terminal domain; that stretch reads PTYYTITFGC…LGDLLAQVEA (117 aa). Positions 13, 49, 83, 155, 159, and 162 each coordinate [4Fe-4S] cluster. Residues 141 to 372 form the Radical SAM core domain; that stretch reads RDSQVTAWIN…RLVAEVAAAR (232 aa). The 65-residue stretch at 374-438 folds into the TRAM domain; that stretch reads ARLLGQVQEV…AFSLTGEAVT (65 aa).

Belongs to the methylthiotransferase family. MiaB subfamily. As to quaternary structure, monomer. The cofactor is [4Fe-4S] cluster.

The protein resides in the cytoplasm. The catalysed reaction is N(6)-dimethylallyladenosine(37) in tRNA + (sulfur carrier)-SH + AH2 + 2 S-adenosyl-L-methionine = 2-methylsulfanyl-N(6)-dimethylallyladenosine(37) in tRNA + (sulfur carrier)-H + 5'-deoxyadenosine + L-methionine + A + S-adenosyl-L-homocysteine + 2 H(+). Catalyzes the methylthiolation of N6-(dimethylallyl)adenosine (i(6)A), leading to the formation of 2-methylthio-N6-(dimethylallyl)adenosine (ms(2)i(6)A) at position 37 in tRNAs that read codons beginning with uridine. The sequence is that of tRNA-2-methylthio-N(6)-dimethylallyladenosine synthase from Synechococcus sp. (strain JA-2-3B'a(2-13)) (Cyanobacteria bacterium Yellowstone B-Prime).